The primary structure comprises 57 residues: Small ribosomal subunit protein bS21 (57 aa).

The segment at 35 to 57 (RERYEKPSLRRKRKQEAARKRNR) is disordered.

Belongs to the bacterial ribosomal protein bS21 family.

This Thermosynechococcus vestitus (strain NIES-2133 / IAM M-273 / BP-1) protein is Small ribosomal subunit protein bS21.